Reading from the N-terminus, the 171-residue chain is Shikimate kinase (171 aa).

14-19 (GAGKST) contacts ATP. Serine 18 is a binding site for Mg(2+). 3 residues coordinate substrate: aspartate 36, arginine 60, and glycine 82. Arginine 120 provides a ligand contact to ATP. Residue arginine 139 participates in substrate binding. Glutamine 156 contacts ATP.

Belongs to the shikimate kinase family. Monomer. The cofactor is Mg(2+).

Its subcellular location is the cytoplasm. The enzyme catalyses shikimate + ATP = 3-phosphoshikimate + ADP + H(+). It participates in metabolic intermediate biosynthesis; chorismate biosynthesis; chorismate from D-erythrose 4-phosphate and phosphoenolpyruvate: step 5/7. Functionally, catalyzes the specific phosphorylation of the 3-hydroxyl group of shikimic acid using ATP as a cosubstrate. The sequence is that of Shikimate kinase from Shewanella woodyi (strain ATCC 51908 / MS32).